The sequence spans 881 residues: Envelope glycoprotein gp160 (881 aa).

The N-terminal stretch at 1 to 19 (MGCLGNQLLIAILLLSVYG) is a signal peptide. Over 20–696 (IYCTQYVTVF…ASWIKYIQYG (677 aa)) the chain is Extracellular. Asn37 carries an N-linked (GlcNAc...) asparagine; by host glycan. Cys44 and Cys57 are joined by a disulfide. 17 N-linked (GlcNAc...) asparagine; by host glycosylation sites follow: Asn70, Asn114, Asn148, Asn158, Asn186, Asn200, Asn204, Asn214, Asn246, Asn249, Asn280, Asn286, Asn297, Asn308, Asn318, Asn373, and Asn379. 5 cysteine pairs are disulfide-bonded: Cys101-Cys222, Cys108-Cys213, Cys113-Cys170, Cys235-Cys265, and Cys245-Cys257. Positions 113-169 (CNKSETDRWGLTKSSTTITTAAPTSAPVSEKIDMVNETSSCIAQNNCTGLEQEQMIS) are V1. Positions 170–213 (CKFTMTGLKRDKTKEYNETWYSTDLVCEQGNSTDNESRCYMNHC) are V2. A V3 region spans residues 313–345 (CRRPGNKTVLPVTIMSGLVFHSQPINDRPKQAW). Residues Cys313 and Cys346 are joined by a disulfide bond. Cystine bridges form between Cys397–Cys461 and Cys404–Cys434. The segment at 404–434 (CKMNWFLNWVEDRDVTTQRPKERHRRNYVPC) is V4. Residues Asn462 and Asn478 are each glycosylated (N-linked (GlcNAc...) asparagine; by host). The interval 477 to 484 (GNQTSITM) is V5. Residues 528–548 (GVFVLGFLGFLATAGSAMGAA) are fusion peptide. The immunosuppression stretch occupies residues 591–607 (LQTRVTAIEKYLKDQAQ). Residues Asn627, Asn636, and Asn652 are each glycosylated (N-linked (GlcNAc...) asparagine; by host). A coiled-coil region spans residues 636–668 (NDTWQEWERKVDFLEENITALLEEAQIQQEKNM). The segment at 673–694 (KLNSWDVFGNWFDLASWIKYIQ) is MPER; binding to GalCer. A helical transmembrane segment spans residues 697 to 717 (IYVVVGVILLRIVIYIVQMLA). Topologically, residues 718 to 881 (KLRQGYRPVF…IRQGLELTLL (164 aa)) are cytoplasmic. A YXXV motif; contains endocytosis signal motif is present at residues 723–726 (YRPV). Positions 737–761 (THTQQDPALPTREGKEGDGGEGGGN) are disordered. The S-palmitoyl cysteine; by host moiety is linked to residue Cys789. The Di-leucine internalization motif signature appears at 880–881 (LL).

As to quaternary structure, the mature envelope protein (Env) consists of a homotrimer of non-covalently associated gp120-gp41 heterodimers. The resulting complex protrudes from the virus surface as a spike. Interacts with host CD4 and CCR5. Gp120 also interacts with the C-type lectins CD209/DC-SIGN and CLEC4M/DC-SIGNR (collectively referred to as DC-SIGN(R)). The mature envelope protein (Env) consists of a homotrimer of non-covalently associated gp120-gp41 heterodimers. The resulting complex protrudes from the virus surface as a spike. In terms of processing, specific enzymatic cleavages in vivo yield mature proteins. Envelope glycoproteins are synthesized as an inactive precursor that is heavily N-glycosylated and processed likely by host cell furin in the Golgi to yield the mature SU and TM proteins. The cleavage site between SU and TM requires the minimal sequence [KR]-X-[KR]-R. Palmitoylation of the transmembrane protein and of Env polyprotein (prior to its proteolytic cleavage) is essential for their association with host cell membrane lipid rafts. Palmitoylation is therefore required for envelope trafficking to classical lipid rafts, but not for viral replication.

The protein resides in the virion membrane. The protein localises to the host cell membrane. It localises to the host endosome membrane. Its function is as follows. The surface protein gp120 (SU) attaches the virus to the host lymphoid cell by binding to the primary receptor CD4. This interaction induces a structural rearrangement creating a high affinity binding site for a chemokine coreceptor like CCR5. This peculiar 2 stage receptor-interaction strategy allows gp120 to maintain the highly conserved coreceptor-binding site in a cryptic conformation, protected from neutralizing antibodies. These changes are transmitted to the transmembrane protein gp41 and are thought to activate its fusogenic potential by unmasking its fusion peptide. Surface protein gp120 (SU) may target the virus to gut-associated lymphoid tissue (GALT) by binding host ITGA4/ITGB7 (alpha-4/beta-7 integrins), a complex that mediates T-cell migration to the GALT. Interaction between gp120 and ITGA4/ITGB7 would allow the virus to enter GALT early in the infection, infecting and killing most of GALT's resting CD4+ T-cells. This T-cell depletion is believed to be the major insult to the host immune system leading to AIDS. In terms of biological role, the surface protein gp120 is a ligand for CD209/DC-SIGN and CLEC4M/DC-SIGNR, which are respectively found on dendritic cells (DCs), and on endothelial cells of liver sinusoids and lymph node sinuses. These interactions allow capture of viral particles at mucosal surfaces by these cells and subsequent transmission to permissive cells. DCs are professional antigen presenting cells, critical for host immunity by inducing specific immune responses against a broad variety of pathogens. They act as sentinels in various tissues where they take up antigen, process it, and present it to T-cells following migration to lymphoid organs. SIV subverts the migration properties of dendritic cells to gain access to CD4+ T-cells in lymph nodes. Virus transmission to permissive T-cells occurs either in trans (without DCs infection, through viral capture and transmission), or in cis (following DCs productive infection, through the usual CD4-gp120 interaction), thereby inducing a robust infection. In trans infection, bound virions remain infectious over days and it is proposed that they are not degraded, but protected in non-lysosomal acidic organelles within the DCs close to the cell membrane thus contributing to the viral infectious potential during DCs' migration from the periphery to the lymphoid tissues. On arrival at lymphoid tissues, intact virions recycle back to DCs' cell surface allowing virus transmission to CD4+ T-cells. Virion capture also seems to lead to MHC-II-restricted viral antigen presentation, and probably to the activation of SIV-specific CD4+ cells. Functionally, the transmembrane protein gp41 (TM) acts as a class I viral fusion protein. Under the current model, the protein has at least 3 conformational states: pre-fusion native state, pre-hairpin intermediate state, and post-fusion hairpin state. During fusion of viral and target intracellular membranes, the coiled coil regions (heptad repeats) assume a trimer-of-hairpins structure, positioning the fusion peptide in close proximity to the C-terminal region of the ectodomain. The formation of this structure appears to drive apposition and subsequent fusion of viral and target cell membranes. Complete fusion occurs in host cell endosomes. The virus undergoes clathrin-dependent internalization long before endosomal fusion, thus minimizing the surface exposure of conserved viral epitopes during fusion and reducing the efficacy of inhibitors targeting these epitopes. Membranes fusion leads to delivery of the nucleocapsid into the cytoplasm. Its function is as follows. The envelope glycoprotein gp160 precursor down-modulates cell surface CD4 antigen by interacting with it in the endoplasmic reticulum and blocking its transport to the cell surface. The gp120-gp41 heterodimer allows rapid transcytosis of the virus through CD4 negative cells such as simple epithelial monolayers of the intestinal, rectal and endocervical epithelial barriers. Both gp120 and gp41 specifically recognize glycosphingolipids galactosyl-ceramide (GalCer) or 3' sulfo-galactosyl-ceramide (GalS) present in the lipid rafts structures of epithelial cells. Binding to these alternative receptors allows the rapid transcytosis of the virus through the epithelial cells. This transcytotic vesicle-mediated transport of virions from the apical side to the basolateral side of the epithelial cells does not involve infection of the cells themselves. The chain is Envelope glycoprotein gp160 (env) from Cercopithecidae (Old World monkeys).